Consider the following 555-residue polypeptide: Undecaprenyl phosphate-alpha-4-amino-4-deoxy-L-arabinose arabinosyl transferase (555 aa).

A run of 11 helical transmembrane segments spans residues 6–26 (GSWA…PLNG), 87–107 (FGSV…AMLM), 116–136 (LATL…YSVL), 178–198 (FMTK…PIVI), 206–226 (LLIY…PWAL), 257–277 (APFW…LALL), 293–313 (ELFF…IAKG), 315–335 (LPTY…AYAE), 351–371 (VLNG…GSGL), 384–404 (PKIV…VVSV), and 411–431 (WSWA…AIPQ).

This sequence belongs to the glycosyltransferase 83 family.

It localises to the cell inner membrane. It carries out the reaction 4-amino-4-deoxy-alpha-L-arabinopyranosyl di-trans,octa-cis-undecaprenyl phosphate + lipid IVA = lipid IIA + di-trans,octa-cis-undecaprenyl phosphate.. It functions in the pathway lipopolysaccharide metabolism; 4-amino-4-deoxy-beta-L-arabinose-lipid A biosynthesis. Catalyzes the transfer of the L-Ara4N moiety of the glycolipid undecaprenyl phosphate-alpha-L-Ara4N to lipid A. The modified arabinose is attached to lipid A and is required for resistance to polymyxin and cationic antimicrobial peptides. The protein is Undecaprenyl phosphate-alpha-4-amino-4-deoxy-L-arabinose arabinosyl transferase of Serratia proteamaculans (strain 568).